We begin with the raw amino-acid sequence, 563 residues long: Arginine--tRNA ligase (563 aa).

This sequence belongs to the class-I aminoacyl-tRNA synthetase family. Monomer.

It carries out the reaction tRNA(Arg) + L-arginine + ATP = L-arginyl-tRNA(Arg) + AMP + diphosphate. The protein is Arginine--tRNA ligase of Encephalitozoon cuniculi (strain GB-M1) (Microsporidian parasite).